A 309-amino-acid polypeptide reads, in one-letter code: Short chain dehydrogenase MYCFIDRAFT_6125 (309 aa).

Residues Ile43, Arg67, Asp88, and Arg150 each contribute to the NADP(+) site. Ser168 functions as the Proton donor in the catalytic mechanism. The NADP(+) site is built by Tyr182, Lys186, Val215, and Ser217. Tyr182 functions as the Proton acceptor in the catalytic mechanism. The active-site Lowers pKa of active site Tyr is the Lys186.

This sequence belongs to the short-chain dehydrogenases/reductases (SDR) family.

It participates in secondary metabolite biosynthesis. In terms of biological role, short chain dehydrogenase; part of the gene cluster that mediates the biosynthesis of an emodin derivative that may be involved in black Sigatoka disease of banana. The pathway begins with the synthesis of atrochrysone thioester by the polyketide synthase PKS8-1. The atrochrysone carboxyl ACP thioesterase MYCFIDRAFT_190111 then breaks the thioester bond and releases the atrochrysone carboxylic acid from PKS8-1. The decarboxylase MYCFIDRAFT_34057 then catalyzes the concerted decarboxylation-elimination required to convert atochrysone carboxylic acid into emodin anthrone, which is further oxidized to emodin by the anthrone oxygenase MYCFIDRAFT_34418. The functions of the other tailoring enzymes as well as the final product of the cluster have still to be identified. In Pseudocercospora fijiensis (strain CIRAD86) (Black leaf streak disease fungus), this protein is Short chain dehydrogenase MYCFIDRAFT_6125.